The sequence spans 704 residues: Fatty acid oxidation complex subunit alpha (704 aa).

An enoyl-CoA hydratase region spans residues 1–190; sequence MSEQKAFSLK…KLGVVDACVP (190 aa). A 3-hydroxyacyl-CoA dehydrogenase region spans residues 308-704; that stretch reads TAVNKVGVLG…RAGEGRNFYD (397 aa).

In the N-terminal section; belongs to the enoyl-CoA hydratase/isomerase family. The protein in the central section; belongs to the 3-hydroxyacyl-CoA dehydrogenase family. As to quaternary structure, heterotetramer of two alpha chains (FadJ) and two beta chains (FadI).

The protein localises to the cytoplasm. The enzyme catalyses a (3S)-3-hydroxyacyl-CoA = a (2E)-enoyl-CoA + H2O. It carries out the reaction a 4-saturated-(3S)-3-hydroxyacyl-CoA = a (3E)-enoyl-CoA + H2O. It catalyses the reaction a (3S)-3-hydroxyacyl-CoA + NAD(+) = a 3-oxoacyl-CoA + NADH + H(+). The catalysed reaction is (3S)-3-hydroxybutanoyl-CoA = (3R)-3-hydroxybutanoyl-CoA. It participates in lipid metabolism; fatty acid beta-oxidation. In terms of biological role, catalyzes the formation of a hydroxyacyl-CoA by addition of water on enoyl-CoA. Also exhibits 3-hydroxyacyl-CoA epimerase and 3-hydroxyacyl-CoA dehydrogenase activities. This is Fatty acid oxidation complex subunit alpha from Vibrio campbellii (strain ATCC BAA-1116).